A 269-amino-acid polypeptide reads, in one-letter code: Probable cysteine protease avirulence protein AvrPpiC2 (269 aa).

The segment at 1 to 39 is disordered; the sequence is MTIVSGHIGKHPSLTTVQAGSSASVENQMPDPAQFSDGR. Polar residues predominate over residues 13 to 27; the sequence is SLTTVQAGSSASVEN. Residues Cys-72, His-213, and Asp-230 contribute to the active site.

Belongs to the peptidase C58 family.

Functionally, potential cysteine protease. Avirulence protein, which may be essential during infection of plant cells from Pea and some Arabidopsis thaliana cultivars. May act by affecting the plant defense system. In plants lacking appropriate resistance (R) gene, it probably impairs the plant defense system and leads to the bacteria multiplication. In contrast, in plants containing the appropriate R protein, it is unable to induce disease symptoms, explaining its avirulence name. This Pseudomonas syringae pv. pisi protein is Probable cysteine protease avirulence protein AvrPpiC2 (avrPpiC2).